Here is a 314-residue protein sequence, read N- to C-terminus: Solute carrier family 25 member 44 (314 aa).

3 Solcar repeats span residues 18–100 (KKFY…TRKF), 107–210 (SNTV…YAEQ), and 220–302 (PHIV…LKKL). The next 6 helical transmembrane spans lie at 20-42 (FYVF…TLIR), 71-90 (TGLY…GQCY), 113-133 (LVAG…IDVV), 185-201 (GYVA…AVWW), 222-239 (IVFQ…ASIL), and 278-296 (LSAR…VVGY).

The protein belongs to the mitochondrial carrier (TC 2.A.29) family.

Its subcellular location is the mitochondrion membrane. The enzyme catalyses L-valine(in) = L-valine(out). It carries out the reaction L-leucine(in) = L-leucine(out). Functionally, mitochondrial solute transporter which transports branched-chain amino acid (BCAA; valine, leucine and isoleucine) into mitochondria in brown adipose tissue (BAT). BAT is involved in BCAA catabolism and actively utilizes BCAA in the mitochondria for thermogenesis. The chain is Solute carrier family 25 member 44 from Pongo abelii (Sumatran orangutan).